A 105-amino-acid polypeptide reads, in one-letter code: Synaptic plasticity regulator PANTS (105 aa).

It belongs to the UPF0545 family. In terms of assembly, interacts with RTN4 isoform A/Nogo-A; the interaction results in enhanced RTN4-mediated inhibition of AMPA receptor clustering. Also interacts with NCAM1, RANBP2 and CCT8. In terms of processing, rapidly degraded by proteolysis following neuronal stimulation, resulting in increased AMPA receptor clustering.

Its subcellular location is the synapse. It localises to the synaptic cleft. Its function is as follows. Negatively regulates long-term potentiation and modulates adult synaptic plasticity. Stabilizes the interaction of RTN4 isoform A/Nogo-A with its receptors, inhibiting clustering of postsynaptic AMPA receptors at synaptic sites. Upon neuronal stimulation, degraded at synapses, reducing RTN4 signaling and allowing AMPA receptor clustering at individual synapses. The protein is Synaptic plasticity regulator PANTS of Pongo abelii (Sumatran orangutan).